The chain runs to 439 residues: uncharacterized protein (439 aa).

This is an uncharacterized protein from Caenorhabditis elegans.